A 473-amino-acid chain; its full sequence is Endoglucanase B (473 aa).

The N-terminal stretch at 1–17 (MKFLNTFSLLSLAIIGS) is a signal peptide. Residues 18-367 (KAMKNISSKE…GLIKGLGNSI (350 aa)) are catalytic. Catalysis depends on E173, which acts as the Proton donor. The active-site Nucleophile is the E295. A linker region spans residues 365–387 (NSIKTRTTIRRTTTTTTSQSQPT). CBM10 domains are found at residues 391–427 (SCFSVNLGYSCCNGCEVEYTDSDGEWGVENGNWCGIK) and 436–473 (ICWSEKLGYPCCQNTSSVVYTDNDGKWGVENGNWCGIY).

Belongs to the glycosyl hydrolase 5 (cellulase A) family.

The catalysed reaction is Endohydrolysis of (1-&gt;4)-beta-D-glucosidic linkages in cellulose, lichenin and cereal beta-D-glucans.. Rate of hydrolysis of cellulo-oligosaccharides increased with increasing chain length from cellotriose to cellopentaose. This chain is Endoglucanase B (CELB), found in Neocallimastix patriciarum (Rumen fungus).